The sequence spans 389 residues: DNA replication and repair protein RecF (389 aa).

Position 30–37 (30–37 (GPNGFGKT)) interacts with ATP.

It belongs to the RecF family.

The protein localises to the cytoplasm. In terms of biological role, the RecF protein is involved in DNA metabolism; it is required for DNA replication and normal SOS inducibility. RecF binds preferentially to single-stranded, linear DNA. It also seems to bind ATP. The sequence is that of DNA replication and repair protein RecF from Mycolicibacterium gilvum (strain PYR-GCK) (Mycobacterium gilvum (strain PYR-GCK)).